The following is a 127-amino-acid chain: Large ribosomal subunit protein uL24 (127 aa).

The protein belongs to the universal ribosomal protein uL24 family. Part of the 50S ribosomal subunit.

In terms of biological role, one of two assembly initiator proteins, it binds directly to the 5'-end of the 23S rRNA, where it nucleates assembly of the 50S subunit. Its function is as follows. One of the proteins that surrounds the polypeptide exit tunnel on the outside of the subunit. In Leptospira biflexa serovar Patoc (strain Patoc 1 / ATCC 23582 / Paris), this protein is Large ribosomal subunit protein uL24.